The chain runs to 535 residues: Cytochrome P450 monooxygenase claP (535 aa).

A run of 2 helical transmembrane segments spans residues 7–27 (IGTL…KLVG) and 225–245 (YFSM…KLPT). Residue cysteine 472 coordinates heme.

This sequence belongs to the cytochrome P450 family. The cofactor is heme.

The protein resides in the membrane. It participates in secondary metabolite biosynthesis; terpenoid biosynthesis. Functionally, cytochrome P450 monooxygenase; part of the gene cluster that mediates the biosynthesis of clavilactone A, a meroterpenoid that features a unique benzo-fused ten-membered carbocyclic ring unit with an alpha,beta-epoxy-gamma-lactone moiety, forming an intriguing 10/5/3 tricyclic nested skeleton. Cytochrome P450 monooxygenases claO, claP, claQ, claU, and claW are close orthologs, suggesting that a redundant function or pseudogenes are present in the cla cluster. These monoxygenases are not involved in clavilactone A biosynthesis nor its modification. ClaR, ClaS and ClaT are sufficient to produce clavilactone A. The biosynthesis begins with the prenyltransferase claS that transfers geranyl pyrophosphate (GPP) to hydroquinone to produces geranylhydroquinone. The cytochrome P450 monooxygenase claR then catalyzes the diradical coupling reaction between the intramolecular hydroquinone and allyl moieties to form the benzo-fused ten-membered carbocyclic ring unit of wigantol. Finally the cytochrome P450 monooxygenase claT exquisitely and stereoselectively assembles the alpha,beta-epoxy-gamma-lactone moiety, producing clavilactone A via arnebinol A. This chain is Cytochrome P450 monooxygenase claP, found in Ampulloclitocybe clavipes (Club foot).